The chain runs to 350 residues: Aminomethyltransferase (350 aa).

Belongs to the GcvT family. In terms of assembly, the glycine cleavage system is composed of four proteins: P, T, L and H.

The enzyme catalyses N(6)-[(R)-S(8)-aminomethyldihydrolipoyl]-L-lysyl-[protein] + (6S)-5,6,7,8-tetrahydrofolate = N(6)-[(R)-dihydrolipoyl]-L-lysyl-[protein] + (6R)-5,10-methylene-5,6,7,8-tetrahydrofolate + NH4(+). Its function is as follows. The glycine cleavage system catalyzes the degradation of glycine. The sequence is that of Aminomethyltransferase from Aquifex aeolicus (strain VF5).